An 816-amino-acid chain; its full sequence is Microbial collagenase (816 aa).

Residues 1-27 form the signal peptide; sequence MSHIRFFPRHRLALACMLASVSSFSFA. Residue His435 coordinates Zn(2+). Glu436 is an active-site residue. Residue His439 coordinates Zn(2+).

This sequence belongs to the peptidase M9A family. Zn(2+) serves as cofactor.

Its subcellular location is the secreted. The catalysed reaction is Digestion of native collagen in the triple helical region at Xaa-|-Gly bonds. With synthetic peptides, a preference is shown for Gly at P3 and P1', Pro and Ala at P2 and P2', and hydroxyproline, Ala or Arg at P3'.. In terms of biological role, possesses gelatinolytic activity. Can cause weak haemolysis on blood agar. The protein is Microbial collagenase (prt) of Vibrio parahaemolyticus serotype O3:K6 (strain RIMD 2210633).